We begin with the raw amino-acid sequence, 32 residues long: Acyclotide phyb-M (32 aa).

Gln1 carries the pyrrolidone carboxylic acid modification. 3 cysteine pairs are disulfide-bonded: Cys5-Cys21, Cys9-Cys23, and Cys14-Cys28.

In terms of processing, contains 3 disulfide bonds. Expressed in midvein, lamina and periphery of leaves (at protein level).

Probably participates in a plant defense mechanism. This Petunia hybrida (Petunia) protein is Acyclotide phyb-M.